The following is a 443-amino-acid chain: MTTRQPLYKSLYFQVIVAIAIGILLGHFYPQTGVALKPLGDGFIKLIKMVIAPIIFCTVVSGIAGMQNMKSVGKTGGYALLYFEIVSTIALLIGLIVVNVVQPGAGMHIDASTLDASKVAAYVTAGNDQSIVGFILNIIPATIVGAFANGDILQVLMFSVVFGFALHRLGAYGKPVLDFIDRFAHVMFNIINMIMKLAPLGALGAMAFTIGAYGVGSLVQLGQLMICFYITCVVFVLVVLGAICRAHGFSVIKLIRYIREELLIVLGTSSSESALPRMLIKMERLGAKKSVVGLVIPTGYSFNLDGTSIYLTMAAVFIAQATDTHMDITHQITLLLVLLLSSKGAAGVTGSGFIVLAATLSAVGHLPVAGLALILGIDRFMSEARALTNLVGNAVATVVVAKWVKELDEDKLQSELASGGRPITDTRETDDLGVAEGPAPSIK.

10 consecutive transmembrane segments (helical) span residues 10–30 (SLYFQVIVAIAIGILLGHFYP), 46–66 (LIKMVIAPIIFCTVVSGIAGM), 78–98 (YALLYFEIVSTIALLIGLIVV), 130–150 (SIVGFILNIIPATIVGAFANG), 152–172 (ILQVLMFSVVFGFALHRLGAY), 199–219 (PLGALGAMAFTIGAYGVGSLV), 224–244 (LMICFYITCVVFVLVVLGAIC), 291–311 (VVGLVIPTGYSFNLDGTSIYL), 332–352 (ITLLLVLLLSSKGAAGVTGSG), and 354–374 (IVLAATLSAVGHLPVAGLALI). The interval 415-443 (ELASGGRPITDTRETDDLGVAEGPAPSIK) is disordered.

Belongs to the dicarboxylate/amino acid:cation symporter (DAACS) (TC 2.A.23) family.

The protein localises to the cell inner membrane. Its function is as follows. Responsible for the transport of dicarboxylates such as succinate, fumarate, and malate from the periplasm across the membrane. This chain is C4-dicarboxylate transport protein, found in Pseudomonas fluorescens (strain ATCC BAA-477 / NRRL B-23932 / Pf-5).